Here is an 864-residue protein sequence, read N- to C-terminus: Probable LRR receptor-like serine/threonine-protein kinase At1g07550 (864 aa).

Positions 1–23 (MDTCTRLLFAACATLSILHLVQS) are cleaved as a signal peptide. At 24–507 (QNQQGFISLD…SCGTRFPTAA (484 aa)) the chain is on the extracellular side. N-linked (GlcNAc...) asparagine glycosylation is found at Asn-49, Asn-229, Asn-256, Asn-289, Asn-432, Asn-445, and Asn-464. LRR repeat units lie at residues 411–434 (RIVK…QNLT), 435–457 (QLQE…LAKM), and 459–480 (YLLV…ALLD). The helical transmembrane segment at 508–528 (VAASVSAVAIIILVLVLIFVL) threads the bilayer. Over 529–864 (RRRKPSAGKV…VDTEINPKAR (336 aa)) the chain is Cytoplasmic. Position 551 is a phosphothreonine (Thr-551). Residues 560 to 831 (NNFQVVIGKG…QVVHVLNECL (272 aa)) form the Protein kinase domain. ATP contacts are provided by residues 566–574 (IGKGGFGVV) and Lys-587. Tyr-632 carries the phosphotyrosine modification. Asp-684 (proton acceptor) is an active-site residue. Phosphothreonine is present on residues Thr-718 and Thr-723. Position 731 is a phosphotyrosine (Tyr-731).

It belongs to the protein kinase superfamily. Ser/Thr protein kinase family.

It is found in the membrane. It catalyses the reaction L-seryl-[protein] + ATP = O-phospho-L-seryl-[protein] + ADP + H(+). It carries out the reaction L-threonyl-[protein] + ATP = O-phospho-L-threonyl-[protein] + ADP + H(+). This is Probable LRR receptor-like serine/threonine-protein kinase At1g07550 from Arabidopsis thaliana (Mouse-ear cress).